Here is a 326-residue protein sequence, read N- to C-terminus: Acetyl-coenzyme A carboxylase carboxyl transferase subunit alpha (326 aa).

The CoA carboxyltransferase C-terminal domain maps to Lys44–Glu298.

Belongs to the AccA family. Acetyl-CoA carboxylase is a heterohexamer composed of biotin carboxyl carrier protein (AccB), biotin carboxylase (AccC) and two subunits each of ACCase subunit alpha (AccA) and ACCase subunit beta (AccD).

Its subcellular location is the cytoplasm. The catalysed reaction is N(6)-carboxybiotinyl-L-lysyl-[protein] + acetyl-CoA = N(6)-biotinyl-L-lysyl-[protein] + malonyl-CoA. The protein operates within lipid metabolism; malonyl-CoA biosynthesis; malonyl-CoA from acetyl-CoA: step 1/1. Functionally, component of the acetyl coenzyme A carboxylase (ACC) complex. First, biotin carboxylase catalyzes the carboxylation of biotin on its carrier protein (BCCP) and then the CO(2) group is transferred by the carboxyltransferase to acetyl-CoA to form malonyl-CoA. In Trichormus variabilis (strain ATCC 29413 / PCC 7937) (Anabaena variabilis), this protein is Acetyl-coenzyme A carboxylase carboxyl transferase subunit alpha.